The following is a 157-amino-acid chain: 6,7-dimethyl-8-ribityllumazine synthase (157 aa).

Residues Phe25, 59–61, and 83–85 each bind 5-amino-6-(D-ribitylamino)uracil; these read AME and AII. 88–89 contacts (2S)-2-hydroxy-3-oxobutyl phosphate; it reads ST. His91 serves as the catalytic Proton donor. Residue Phe116 participates in 5-amino-6-(D-ribitylamino)uracil binding. Arg130 lines the (2S)-2-hydroxy-3-oxobutyl phosphate pocket.

The protein belongs to the DMRL synthase family.

It catalyses the reaction (2S)-2-hydroxy-3-oxobutyl phosphate + 5-amino-6-(D-ribitylamino)uracil = 6,7-dimethyl-8-(1-D-ribityl)lumazine + phosphate + 2 H2O + H(+). It functions in the pathway cofactor biosynthesis; riboflavin biosynthesis; riboflavin from 2-hydroxy-3-oxobutyl phosphate and 5-amino-6-(D-ribitylamino)uracil: step 1/2. Its function is as follows. Catalyzes the formation of 6,7-dimethyl-8-ribityllumazine by condensation of 5-amino-6-(D-ribitylamino)uracil with 3,4-dihydroxy-2-butanone 4-phosphate. This is the penultimate step in the biosynthesis of riboflavin. The sequence is that of 6,7-dimethyl-8-ribityllumazine synthase from Lawsonia intracellularis (strain PHE/MN1-00).